Reading from the N-terminus, the 189-residue chain is Interferon alpha-1 (189 aa).

An N-terminal signal peptide occupies residues 1-23 (MAPTSAFLTALVLLSCNAICSLG). 2 cysteine pairs are disulfide-bonded: Cys-24–Cys-122 and Cys-52–Cys-162.

Belongs to the alpha/beta interferon family. In terms of assembly, interacts with CR2.

The protein localises to the secreted. Produced by macrophages, IFN-alpha have antiviral activities. Interferon stimulates the production of two enzymes: a protein kinase and an oligoadenylate synthetase. This chain is Interferon alpha-1, found in Sus scrofa (Pig).